A 515-amino-acid polypeptide reads, in one-letter code: 2-isopropylmalate synthase (515 aa).

The region spanning 5-267 (VIIFDTTLRD…DTRINTQEIH (263 aa)) is the Pyruvate carboxyltransferase domain. D14, H202, H204, and N238 together coordinate Mn(2+). The interval 392 to 515 (VLDKLSAHST…VADIKSHKHH (124 aa)) is regulatory domain.

It belongs to the alpha-IPM synthase/homocitrate synthase family. LeuA type 1 subfamily. Homodimer. The cofactor is Mn(2+).

Its subcellular location is the cytoplasm. It carries out the reaction 3-methyl-2-oxobutanoate + acetyl-CoA + H2O = (2S)-2-isopropylmalate + CoA + H(+). It functions in the pathway amino-acid biosynthesis; L-leucine biosynthesis; L-leucine from 3-methyl-2-oxobutanoate: step 1/4. Functionally, catalyzes the condensation of the acetyl group of acetyl-CoA with 3-methyl-2-oxobutanoate (2-ketoisovalerate) to form 3-carboxy-3-hydroxy-4-methylpentanoate (2-isopropylmalate). The polypeptide is 2-isopropylmalate synthase (Haemophilus influenzae (strain 86-028NP)).